The sequence spans 335 residues: Arylacetonitrilase (335 aa).

The region spanning 6 to 291 (LKVAITQAQP…EGIVYADLDM (286 aa)) is the CN hydrolase domain. The Proton acceptor role is filled by E46. Residue K127 is part of the active site. C168 acts as the Nucleophile in catalysis.

Belongs to the carbon-nitrogen hydrolase superfamily. Nitrilase family.

It carries out the reaction a nitrile + 2 H2O = a carboxylate + NH4(+). The enzyme catalyses 4-chlorophenylacetonitrile + 2 H2O = 4-chlorophenylacetate + NH4(+). In terms of biological role, nitrilase that hydrolyzes preferentially phenylacetonitrile, (R,S)-mandelonitrile, and 3-indolylacetonitrile. The protein is Arylacetonitrilase of Arthroderma benhamiae (strain ATCC MYA-4681 / CBS 112371) (Trichophyton mentagrophytes).